Here is a 322-residue protein sequence, read N- to C-terminus: Putative UDP-N-acetylglucosamine--dolichyl-phosphate N-acetylglucosaminephosphotransferase (322 aa).

The next 9 helical transmembrane spans lie at 5-25 (AILLPILISFFISYITTVWVI), 46-66 (IPLLGGIGIIAGFIAGSFSLL), 76-96 (IPAVILSSLLIAFLGLLDDIF), 102-122 (VRAFLPIFASVPLIVYSVGHS), 123-143 (IISIPFLGPINFGIFYYIIII), 160-180 (LNGLGVGMGIIMLSALAYIGL), 186-206 (TYQAGLIALSAIFSLSAFLIF), 222-242 (FIGALIGAIGIAGFMYTALAI), and 295-315 (YQVVIILWGMEAIFAVIAVIL).

The protein belongs to the glycosyltransferase 4 family.

Its subcellular location is the cell membrane. It carries out the reaction a di-trans,poly-cis-dolichyl phosphate + UDP-N-acetyl-alpha-D-glucosamine = an N-acetyl-alpha-D-glucosaminyl-diphospho-di-trans,poly-cis-dolichol + UMP. Inhibited by tunicamycin. This chain is Putative UDP-N-acetylglucosamine--dolichyl-phosphate N-acetylglucosaminephosphotransferase (gnpTA), found in Saccharolobus solfataricus (strain ATCC 35092 / DSM 1617 / JCM 11322 / P2) (Sulfolobus solfataricus).